Reading from the N-terminus, the 206-residue chain is Ribosome maturation factor RimP (206 aa).

The protein belongs to the RimP family.

The protein localises to the cytoplasm. Its function is as follows. Required for maturation of 30S ribosomal subunits. The sequence is that of Ribosome maturation factor RimP from Paracoccus denitrificans (strain Pd 1222).